We begin with the raw amino-acid sequence, 348 residues long: MGPRARPALFFLILLRTVAAQGRPPRSHSLRYLFMGASERDHGLPLFEALGYVDDELFVAYNHESRRAESRAQWVLGEAHSQLWLQLSQSLKGWDHMFIVDFWTIMDNHNHSKESHTLQVILGCEVQEDNSTRGFWMYGYDGQDHLEFCPETLDWRAAESRALTTKLEWEVNKIRAKQNRAYLERDCPEQLQWLLELGRGVLDQQVPPLVKVTHHVASAVTTLRCQALNFYPQNITMRWLKDRKPVDVKDAESKDVLPSGDGTYQSWVALAVPPGEEQRYTCQVEHPGLDQPLTATWEPSLSNTLVTGVISGIAVCVIIFLIGILFRILRKRQASRGAMGDYVLAECE.

The signal sequence occupies residues methionine 1–glycine 22. The tract at residues arginine 23–glutamate 114 is alpha-1. The Extracellular portion of the chain corresponds to arginine 23–valine 306. Residues asparagine 110, asparagine 130, and asparagine 234 are each glycosylated (N-linked (GlcNAc...) asparagine). The alpha-2 stretch occupies residues serine 115–glutamine 205. Intrachain disulfides connect cysteine 124–cysteine 187 and cysteine 225–cysteine 282. Residues valine 206 to tryptophan 297 form an alpha-3 region. The Ig-like C1-type domain occupies proline 207–threonine 296. Positions glutamate 298–valine 306 are connecting peptide. The chain crosses the membrane as a helical span at residues threonine 307–arginine 330. Residues lysine 331 to glutamate 348 lie on the Cytoplasmic side of the membrane.

It belongs to the MHC class I family. In terms of assembly, binds TFR through the extracellular domain in a pH-dependent manner.

It localises to the cell membrane. Its function is as follows. Binds to transferrin receptor (TFR) and reduces its affinity for iron-loaded transferrin. This chain is Hereditary hemochromatosis protein homolog (HFE), found in Rhinoceros unicornis (Greater Indian rhinoceros).